The primary structure comprises 137 residues: NADH dehydrogenase [ubiquinone] 1 beta subcomplex subunit 7 (137 aa).

A lipid anchor (N-myristoyl glycine) is attached at Gly2. The CHCH domain occupies 56 to 98; it reads RDYCAHYLIRFLKCKRDSFPNFLACKHERHDWDYCEHLDYVKR. Residues 59–69 carry the Cx9C motif 1 motif; sequence CAHYLIRFLKC. 2 cysteine pairs are disulfide-bonded: Cys59-Cys90 and Cys69-Cys80. At Ser73 the chain carries Phosphoserine. The short motif at 80 to 90 is the Cx9C motif 2 element; that stretch reads CKHERHDWDYC. Positions 110 to 137 are disordered; it reads QRKKRREQREADMAKGLGPGEVAPEVAL.

It belongs to the complex I NDUFB7 subunit family. As to quaternary structure, complex I is composed of 45 different subunits.

It is found in the mitochondrion inner membrane. It localises to the mitochondrion intermembrane space. Accessory subunit of the mitochondrial membrane respiratory chain NADH dehydrogenase (Complex I), that is believed not to be involved in catalysis. Complex I functions in the transfer of electrons from NADH to the respiratory chain. The immediate electron acceptor for the enzyme is believed to be ubiquinone. The sequence is that of NADH dehydrogenase [ubiquinone] 1 beta subcomplex subunit 7 (NDUFB7) from Bos taurus (Bovine).